A 333-amino-acid chain; its full sequence is Tetraacyldisaccharide 4'-kinase (333 aa).

ATP is bound at residue 60–67; it reads TVGGTGKT.

Belongs to the LpxK family.

The catalysed reaction is a lipid A disaccharide + ATP = a lipid IVA + ADP + H(+). It functions in the pathway glycolipid biosynthesis; lipid IV(A) biosynthesis; lipid IV(A) from (3R)-3-hydroxytetradecanoyl-[acyl-carrier-protein] and UDP-N-acetyl-alpha-D-glucosamine: step 6/6. Transfers the gamma-phosphate of ATP to the 4'-position of a tetraacyldisaccharide 1-phosphate intermediate (termed DS-1-P) to form tetraacyldisaccharide 1,4'-bis-phosphate (lipid IVA). The chain is Tetraacyldisaccharide 4'-kinase from Pseudomonas putida (strain ATCC 700007 / DSM 6899 / JCM 31910 / BCRC 17059 / LMG 24140 / F1).